Consider the following 229-residue polypeptide: Ribonuclease 3 (229 aa).

The region spanning 5–127 (LARLERKLGY…LIGAIYLDAD (123 aa)) is the RNase III domain. Position 40 (Glu40) interacts with Mg(2+). Asp44 is a catalytic residue. Mg(2+) is bound by residues Asp113 and Glu116. Glu116 is an active-site residue. The region spanning 154 to 224 (DPKTRLQEFL…AASALIALGV (71 aa)) is the DRBM domain.

It belongs to the ribonuclease III family. As to quaternary structure, homodimer. Requires Mg(2+) as cofactor.

It is found in the cytoplasm. It carries out the reaction Endonucleolytic cleavage to 5'-phosphomonoester.. Functionally, digests double-stranded RNA. Involved in the processing of primary rRNA transcript to yield the immediate precursors to the large and small rRNAs (23S and 16S). Processes some mRNAs, and tRNAs when they are encoded in the rRNA operon. Processes pre-crRNA and tracrRNA of type II CRISPR loci if present in the organism. This chain is Ribonuclease 3, found in Pseudomonas putida (strain GB-1).